The sequence spans 243 residues: uncharacterized protein (243 aa).

Positions 1–16 (MKLLALVALCAVGVAS) are cleaved as a signal peptide. A glycan (N-linked (GlcNAc...) asparagine) is linked at asparagine 55. Disordered stretches follow at residues 95–126 (SQGR…EKPS) and 208–235 (NQQQ…KPTV). Low complexity-rich tracts occupy residues 99–112 (NQQQ…SQGG) and 209–229 (QQQQ…STTL). The cysteines at positions 141 and 239 are disulfide-linked.

The protein belongs to the protease inhibitor I33 family.

It is found in the secreted. This is an uncharacterized protein from Caenorhabditis elegans.